Consider the following 154-residue polypeptide: 6,7-dimethyl-8-ribityllumazine synthase (154 aa).

5-amino-6-(D-ribitylamino)uracil-binding positions include Phe-22, 56 to 58, and 80 to 82; these read SFE and AVI. 85-86 is a binding site for (2S)-2-hydroxy-3-oxobutyl phosphate; sequence ST. His-88 acts as the Proton donor in catalysis. Tyr-113 contacts 5-amino-6-(D-ribitylamino)uracil. Residue Arg-127 participates in (2S)-2-hydroxy-3-oxobutyl phosphate binding.

It belongs to the DMRL synthase family. Forms an icosahedral capsid composed of 60 subunits, arranged as a dodecamer of pentamers.

The enzyme catalyses (2S)-2-hydroxy-3-oxobutyl phosphate + 5-amino-6-(D-ribitylamino)uracil = 6,7-dimethyl-8-(1-D-ribityl)lumazine + phosphate + 2 H2O + H(+). It functions in the pathway cofactor biosynthesis; riboflavin biosynthesis; riboflavin from 2-hydroxy-3-oxobutyl phosphate and 5-amino-6-(D-ribitylamino)uracil: step 1/2. Functionally, catalyzes the formation of 6,7-dimethyl-8-ribityllumazine by condensation of 5-amino-6-(D-ribitylamino)uracil with 3,4-dihydroxy-2-butanone 4-phosphate. This is the penultimate step in the biosynthesis of riboflavin. This is 6,7-dimethyl-8-ribityllumazine synthase from Sulfurihydrogenibium sp. (strain YO3AOP1).